The sequence spans 334 residues: Glycerol-3-phosphate dehydrogenase [NAD(P)+] (334 aa).

NADPH is bound by residues Ser-14, Tyr-15, His-35, and Lys-109. Residues Lys-109, Gly-138, and Thr-140 each contribute to the sn-glycerol 3-phosphate site. Residue Ala-142 participates in NADPH binding. Sn-glycerol 3-phosphate-binding residues include Lys-194, Asp-247, Ser-257, Arg-258, and Asn-259. Lys-194 serves as the catalytic Proton acceptor. Residue Arg-258 participates in NADPH binding. Val-282 and Glu-284 together coordinate NADPH.

It belongs to the NAD-dependent glycerol-3-phosphate dehydrogenase family.

It localises to the cytoplasm. The catalysed reaction is sn-glycerol 3-phosphate + NAD(+) = dihydroxyacetone phosphate + NADH + H(+). The enzyme catalyses sn-glycerol 3-phosphate + NADP(+) = dihydroxyacetone phosphate + NADPH + H(+). It functions in the pathway membrane lipid metabolism; glycerophospholipid metabolism. In terms of biological role, catalyzes the reduction of the glycolytic intermediate dihydroxyacetone phosphate (DHAP) to sn-glycerol 3-phosphate (G3P), the key precursor for phospholipid synthesis. This chain is Glycerol-3-phosphate dehydrogenase [NAD(P)+], found in Aeromonas hydrophila subsp. hydrophila (strain ATCC 7966 / DSM 30187 / BCRC 13018 / CCUG 14551 / JCM 1027 / KCTC 2358 / NCIMB 9240 / NCTC 8049).